A 404-amino-acid polypeptide reads, in one-letter code: Tryptophan synthase beta chain (404 aa).

Lysine 94 carries the N6-(pyridoxal phosphate)lysine modification.

The protein belongs to the TrpB family. As to quaternary structure, tetramer of two alpha and two beta chains. Pyridoxal 5'-phosphate serves as cofactor.

The enzyme catalyses (1S,2R)-1-C-(indol-3-yl)glycerol 3-phosphate + L-serine = D-glyceraldehyde 3-phosphate + L-tryptophan + H2O. Its pathway is amino-acid biosynthesis; L-tryptophan biosynthesis; L-tryptophan from chorismate: step 5/5. Functionally, the beta subunit is responsible for the synthesis of L-tryptophan from indole and L-serine. This chain is Tryptophan synthase beta chain, found in Staphylococcus aureus (strain JH1).